The primary structure comprises 551 residues: Bestrophin-1 (551 aa).

Residues 1–31 are Cytoplasmic-facing; sequence MTITYTNKVANARLGSFSSLLLCWRGSIYKL. Ca(2+) is bound at residue Ala-10. A helical transmembrane segment spans residues 32–51; sequence LYGEFLVFIFLYYSIRGLYR. At 52-60 the chain is on the extracellular side; it reads MVLSSDQQL. The chain crosses the membrane as a helical span at residues 61-82; it reads LFEKLALYCDSYIQLIPISFVL. Over 83 to 237 the chain is Cytoplasmic; sequence GFYVTLVVSR…DWISIPLVYT (155 aa). A helical transmembrane segment spans residues 238 to 255; sequence QVVTVAVYSFFLACLIGR. Topologically, residues 256–274 are extracellular; it reads QFLNPNKDYPGHEMDLVVP. The chain crosses the membrane as a helical span at residues 275–288; that stretch reads VFTILQFLFYMGWL. At 289 to 551 the chain is on the cytoplasmic side; sequence KVAEQLINPF…EAGTKPVLYE (263 aa). Ca(2+)-binding residues include Gln-293, Asn-296, Asp-301, and Asp-304. The tract at residues 346–379 is auto-inhibitory segment; that stretch reads PYTAASARSRRHSFMGSTFNISLKKEDLELWSKE. Residues 459 to 489 form a disordered region; it reads SHCGPQAPSSHPTEQSAPSSSDTGDGPSTDY. The span at 465–475 shows a compositional bias: polar residues; that stretch reads APSSHPTEQSA. Over residues 476–488 the composition is skewed to low complexity; sequence PSSSDTGDGPSTD.

This sequence belongs to the anion channel-forming bestrophin (TC 1.A.46) family. Calcium-sensitive chloride channel subfamily. Interacts with YWHAG; this interaction promotes the ligand-gated L-glutamate channel activity leading to the positive regulation of NMDA glutamate receptor activity through the L-glutamate secretion.

Its subcellular location is the cell membrane. It localises to the basolateral cell membrane. The catalysed reaction is 4-aminobutanoate(in) = 4-aminobutanoate(out). It carries out the reaction L-glutamate(out) = L-glutamate(in). It catalyses the reaction chloride(in) = chloride(out). The enzyme catalyses hydrogencarbonate(in) = hydrogencarbonate(out). The catalysed reaction is D-serine(in) = D-serine(out). With respect to regulation, inactivated by sulfhydryl-reactive agents. Ligand-gated anion channel that allows the movement of anions across cell membranes when activated by calcium (Ca2+). Allows the movement of chloride and hydrogencarbonate. Found in a partially open conformation leading to significantly smaller chloride movement. Upon F2R/PAR-1 activation, the sequestered calcium is released into the cytosol of astrocytes, leading to the (Ca2+)-dependent release of L-glutamate into the synaptic cleft that targets the neuronal postsynaptic GRIN2A/NMDAR receptor resulting in the synaptic plasticity regulation. Upon activation of the norepinephrine-alpha-1 adrenergic receptor signaling pathway, transports as well D-serine than L-glutamate in a (Ca2+)-dependent manner, leading to activation of adjacent NMDAR receptors and therefore regulates the heterosynaptic long-term depression and metaplasticity during initial memory acquisition. Releases the 4-aminobutanoate neurotransmitter in a (Ca2+)-dependent manner, and participates in its tonic release from cerebellar glial cells. In Mus musculus (Mouse), this protein is Bestrophin-1.